A 445-amino-acid polypeptide reads, in one-letter code: MSEYLSVTTLTKYIKYKFDQDPHLQSILLKGELSNFKKHSSGHLYFNVKDKDSVISAMMFKGNANQLTFEPKEGDEVLLEARVSVYERRGNYQIYVNKMELDGIGNLYQKLEQLKQKLKKEGFFNNEHKKPIPRFPKKIAILTASTGAAIRDIQSTINSRYPLAEKIQISTLVQGTQAKEDIIKNIKYADSLGVDTIIVGRGGGSIEDLWNFNEEDVVKAIFECQTPIISAVGHETDFTLSDFVADVRAATPTQAAVMATPDQYELMQQIKQYQFSLSRYIKQYLEKQYKQLDHLASYYKFKQPSLLYDQQIQRKDDLERQLTQLLLSKIENKKYQLKVLHQNFNVKTLNQTILQNKRQLVNVKNRLSNLTMKNIHNNKLEFKNKVELLNNLSPTNTMLRGYSIINKDDKVITSTQDLSKDDEITLAMKDGNVDAIVKKVRCEHE.

This sequence belongs to the XseA family. Heterooligomer composed of large and small subunits.

It localises to the cytoplasm. The catalysed reaction is Exonucleolytic cleavage in either 5'- to 3'- or 3'- to 5'-direction to yield nucleoside 5'-phosphates.. Bidirectionally degrades single-stranded DNA into large acid-insoluble oligonucleotides, which are then degraded further into small acid-soluble oligonucleotides. This chain is Exodeoxyribonuclease 7 large subunit, found in Staphylococcus haemolyticus (strain JCSC1435).